The primary structure comprises 515 residues: Putative pumilio homolog 8, chloroplastic (515 aa).

The interval 1 to 33 is disordered; sequence MMRGEFGEASSLSRSPSSPLQTEPHPQSPKFYR. A chloroplast-targeting transit peptide spans 1–70; that stretch reads MMRGEFGEAS…LSSYFSNGLC (70 aa). Positions 10–20 are enriched in low complexity; it reads SSLSRSPSSPL. The PUM-HD domain maps to 174–515; sequence SGVGALFDHQ…RIFSRNLLKN (342 aa). 8 Pumilio repeats span residues 198-233, 234-269, 270-308, 310-345, 346-381, 382-417, 418-456, and 457-490; these read EFQG…VIFS, EVIP…QIIL, MVTS…SLVK, ALRP…FIFE, DATK…KLVT, EISR…AMLA, QLKG…ELIS, and VPHF…TLVE.

It localises to the plastid. The protein localises to the chloroplast. The protein resides in the cytoplasm. Its function is as follows. Sequence-specific RNA-binding protein that regulates translation and mRNA stability by binding the 3'-UTR of target mRNAs. The polypeptide is Putative pumilio homolog 8, chloroplastic (APUM8) (Arabidopsis thaliana (Mouse-ear cress)).